The following is a 302-amino-acid chain: tRNA dimethylallyltransferase (302 aa).

ATP is bound at residue 9–16 (GPTGTGKS). 11 to 16 (TGTGKS) lines the substrate pocket.

This sequence belongs to the IPP transferase family. In terms of assembly, monomer. Mg(2+) is required as a cofactor.

It catalyses the reaction adenosine(37) in tRNA + dimethylallyl diphosphate = N(6)-dimethylallyladenosine(37) in tRNA + diphosphate. Functionally, catalyzes the transfer of a dimethylallyl group onto the adenine at position 37 in tRNAs that read codons beginning with uridine, leading to the formation of N6-(dimethylallyl)adenosine (i(6)A). The chain is tRNA dimethylallyltransferase from Mycolicibacterium smegmatis (strain ATCC 700084 / mc(2)155) (Mycobacterium smegmatis).